A 349-amino-acid polypeptide reads, in one-letter code: Putative methylesterase 12, chloroplastic (349 aa).

A chloroplast-targeting transit peptide spans 1 to 77 (MGNRVICMKK…GSTSSRRGTL (77 aa)). The disordered stretch occupies residues 61 to 80 (GSMSRRIGSTSSRRGTLSDS). S173 serves as the catalytic Acyl-ester intermediate. Active-site charge relay system residues include D300 and H328.

This sequence belongs to the AB hydrolase superfamily. Methylesterase family.

The protein localises to the plastid. It localises to the chloroplast. In terms of biological role, putative methylesterase. The polypeptide is Putative methylesterase 12, chloroplastic (Arabidopsis thaliana (Mouse-ear cress)).